Here is a 186-residue protein sequence, read N- to C-terminus: Ribosome-recycling factor (186 aa).

Belongs to the RRF family.

The protein localises to the cytoplasm. In terms of biological role, responsible for the release of ribosomes from messenger RNA at the termination of protein biosynthesis. May increase the efficiency of translation by recycling ribosomes from one round of translation to another. The protein is Ribosome-recycling factor of Nitratidesulfovibrio vulgaris (strain DP4) (Desulfovibrio vulgaris).